The following is a 182-amino-acid chain: Protein YopQ (182 aa).

Residues 1–24 (MFIKDAYNMRALCTALEQSAPDTI) form the signal peptide.

Its subcellular location is the secreted. Its function is as follows. May function as a virulence determinant. The sequence is that of Protein YopQ (yopQ) from Yersinia enterocolitica.